A 492-amino-acid chain; its full sequence is Glycerol kinase (492 aa).

T11 contacts ADP. ATP-binding residues include T11 and T12. T11 contributes to the sn-glycerol 3-phosphate binding site. K15 contributes to the ADP binding site. Positions 79, 80, 129, and 238 each coordinate sn-glycerol 3-phosphate. Positions 79, 80, 129, 238, and 239 each coordinate glycerol. ADP contacts are provided by T260, G302, G403, and N407. The ATP site is built by T260, G302, and G403.

Belongs to the FGGY kinase family.

The enzyme catalyses glycerol + ATP = sn-glycerol 3-phosphate + ADP + H(+). It participates in polyol metabolism; glycerol degradation via glycerol kinase pathway; sn-glycerol 3-phosphate from glycerol: step 1/1. With respect to regulation, inhibited by fructose 1,6-bisphosphate (FBP). Key enzyme in the regulation of glycerol uptake and metabolism. Catalyzes the phosphorylation of glycerol to yield sn-glycerol 3-phosphate. The sequence is that of Glycerol kinase from Aquifex aeolicus (strain VF5).